A 507-amino-acid chain; its full sequence is Eukaryotic translation initiation factor 4E-binding protein Mextli homolog (507 aa).

The tract at residues 126–163 (RPEGQHDPAPTVGIPPSATSPPTQVTSSVTSPVPSSPQ) is disordered. Over residues 140 to 158 (PPSATSPPTQVTSSVTSPV) the composition is skewed to low complexity. The 66-residue stretch at 242–307 (QLRHEMIIRN…EDIERAKDMI (66 aa)) folds into the KH domain. Disordered regions lie at residues 314-360 (NMSP…DEDI) and 395-424 (ARPS…QQEP). Polar residues predominate over residues 329 to 348 (QYSGMSSENQSIPSQQNTAN). Residues 349–360 (IDEDDDDDDEDI) show a composition bias toward acidic residues.

As to quaternary structure, interacts with eukaryotic translation initiation factor ife-3.

Its subcellular location is the cytoplasm. Its function is as follows. Plays a role in promoting translation. In Caenorhabditis elegans, this protein is Eukaryotic translation initiation factor 4E-binding protein Mextli homolog.